Reading from the N-terminus, the 610-residue chain is Menin (610 aa).

An interaction with FANCD2 region spans residues 214–390; it reads GVAERSWLYL…SLLEAGEERP (177 aa). The segment at 460–552 is disordered; it reads REAEAAEAEE…SPPPEGPVLT (93 aa). The span at 484 to 500 shows a compositional bias: basic and acidic residues; sequence RRESKPEEPPPPKKPAL. Phosphoserine is present on residues Ser-487 and Ser-543. A Phosphothreonine modification is found at Thr-594.

As to quaternary structure, component of the MLL-HCF complex, at least composed of KMT2A/MLL1, MEN1, ASH2L, RBBP5, DPY30, WDR5, HCFC1 and HCFC2. Component of the menin-associated histone methyltransferase complex, at least composed of KMT2B/MLL4, MEN1, ASH2L, RBBP5, DPY30 and WDR5. Interacts with POLR2B. Interacts with POLR2A phosphorylated at 'Ser-5', but not with the unphosphorylated, nor 'Ser-2' phosphorylated POLR2A forms. Interacts with FANCD2 and DBF4. Interacts with JUND (via MBM motif); inhibits the interaction of JUND with MAPK10 and the phosphorylation of JUND by MAP kinases MAPK8 and MAPK10. Interacts with SMAD3, but not with SMAD2, nor SMAD4. Directly interacts with NFKB1, NFKB2 and RELA. Interacts with KMT2A (via MBM motif). The KMT2A-MEN1 complex interacts with PSIP1 with a greater affinity as MEN1 enhances interaction of KMT2A with PSIP1. Interacts with the fusion protein KMT2A-MLLT3. In terms of tissue distribution, ubiquitous.

It is found in the nucleus. Essential component of a MLL/SET1 histone methyltransferase (HMT) complex, a complex that specifically methylates 'Lys-4' of histone H3 (H3K4). Functions as a transcriptional regulator. Binds to the TERT promoter and represses telomerase expression. Plays a role in TGFB1-mediated inhibition of cell-proliferation, possibly regulating SMAD3 transcriptional activity. Represses JUND-mediated transcriptional activation on AP1 sites, as well as that mediated by NFKB subunit RELA. Positively regulates HOXC8 and HOXC6 gene expression. May be involved in normal hematopoiesis through the activation of HOXA9 expression. May be involved in DNA repair. The protein is Menin (MEN1) of Homo sapiens (Human).